A 176-amino-acid chain; its full sequence is 3-hydroxydecanoyl-[acyl-carrier-protein] dehydratase (176 aa).

Histidine 75 is an active-site residue.

Belongs to the thioester dehydratase family. FabA subfamily. Homodimer.

Its subcellular location is the cytoplasm. It carries out the reaction a (3R)-hydroxyacyl-[ACP] = a (2E)-enoyl-[ACP] + H2O. The enzyme catalyses (3R)-hydroxydecanoyl-[ACP] = (2E)-decenoyl-[ACP] + H2O. The catalysed reaction is (2E)-decenoyl-[ACP] = (3Z)-decenoyl-[ACP]. Its pathway is lipid metabolism; fatty acid biosynthesis. In terms of biological role, necessary for the introduction of cis unsaturation into fatty acids. Catalyzes the dehydration of (3R)-3-hydroxydecanoyl-ACP to E-(2)-decenoyl-ACP and then its isomerization to Z-(3)-decenoyl-ACP. Can catalyze the dehydratase reaction for beta-hydroxyacyl-ACPs with saturated chain lengths up to 16:0, being most active on intermediate chain length. The sequence is that of 3-hydroxydecanoyl-[acyl-carrier-protein] dehydratase from Haemophilus ducreyi (strain 35000HP / ATCC 700724).